Reading from the N-terminus, the 248-residue chain is Deoxyribose-phosphate aldolase (248 aa).

Asp-117 acts as the Proton donor/acceptor in catalysis. The active-site Schiff-base intermediate with acetaldehyde is the Lys-179. Lys-208 serves as the catalytic Proton donor/acceptor.

Belongs to the DeoC/FbaB aldolase family. DeoC type 1 subfamily.

The protein resides in the cytoplasm. It catalyses the reaction 2-deoxy-D-ribose 5-phosphate = D-glyceraldehyde 3-phosphate + acetaldehyde. It participates in carbohydrate degradation; 2-deoxy-D-ribose 1-phosphate degradation; D-glyceraldehyde 3-phosphate and acetaldehyde from 2-deoxy-alpha-D-ribose 1-phosphate: step 2/2. Catalyzes a reversible aldol reaction between acetaldehyde and D-glyceraldehyde 3-phosphate to generate 2-deoxy-D-ribose 5-phosphate. In Thermotoga petrophila (strain ATCC BAA-488 / DSM 13995 / JCM 10881 / RKU-1), this protein is Deoxyribose-phosphate aldolase.